A 720-amino-acid chain; its full sequence is MNPIVKTFPYGQHTVTIETGVMARQATAAVMVSMDDTAVLVTVVGKKEAVEGRDFFPLTVNYQERTYAAGRIPGGFFKREGRPSEGETLTARLIDRPIRPLFPEGFLNEVQVVATVMSVNPAVSPDIVAMIGTSAALAISGIPFNGPIGAARVGYINDQYILNPSVVELQESKLDLVVAGTAAAVLMVESEAAILPEEVMLGAVVYGHDQLQTVIKAVNEFAAEVGTKPWNWVAPAANVTLKAKIAELAVAAIGEAYRITEKAVRYDAISALKQRIVAEIVAADETQDAGEVADLFHELESDVVRGRILRGEPRIDGRDPQMIRALSVGTGVLPRVHGSALFTRGETQALVACTLGTERDAQTIDEITGERTDRFMLHYNFPPYCVGETGMMGSPKRREIGHGRLARRGVSAVIPSQAEFPYVVRVVSEITESNGSSSMASVCGTSLALMDAGVPIKASVAGIAMGLVKEGDSFVVLSDILGDEDHLGDMDFKVAGTSEGVTALQMDIKIEGITKEIMQIALKQARDARLHILTVMDKAIGVARDDISDFAPRIHTIKINPEKIKDVIGKGGSVIRALTEETGTTIELEDDGTVKIAAVSGEAAQEAIRRIQALTADVEIGRIYEGKVTRLAEFGAFVNILPGKDGLVHISQITDERVKDVSDYLKVGDMVRTKVLEVDRQGRIRLSIKEAKRDELPAAESVAESAPAQEAVVEQVPMTE.

Mg(2+) is bound by residues D485 and D491. Residues 552-615 (PRIHTIKINP…EAIRRIQALT (64 aa)) enclose the KH domain. The S1 motif domain occupies 621–689 (GRIYEGKVTR…RQGRIRLSIK (69 aa)). The disordered stretch occupies residues 697–720 (PAAESVAESAPAQEAVVEQVPMTE). Low complexity predominate over residues 698-720 (AAESVAESAPAQEAVVEQVPMTE).

This sequence belongs to the polyribonucleotide nucleotidyltransferase family. As to quaternary structure, component of the RNA degradosome, which is a multiprotein complex involved in RNA processing and mRNA degradation. Mg(2+) is required as a cofactor.

The protein localises to the cytoplasm. It catalyses the reaction RNA(n+1) + phosphate = RNA(n) + a ribonucleoside 5'-diphosphate. Involved in mRNA degradation. Catalyzes the phosphorolysis of single-stranded polyribonucleotides processively in the 3'- to 5'-direction. The polypeptide is Polyribonucleotide nucleotidyltransferase (Tolumonas auensis (strain DSM 9187 / NBRC 110442 / TA 4)).